A 465-amino-acid polypeptide reads, in one-letter code: Cysteine--tRNA ligase (465 aa).

Position 27 (cysteine 27) interacts with Zn(2+). The 'HIGH' region signature appears at 29 to 39; the sequence is PTVYDDAHLGH. Residues cysteine 207, histidine 237, and glutamate 241 each coordinate Zn(2+). The short motif at 269–273 is the 'KMSKS' region element; it reads KMSKS. Lysine 272 contacts ATP.

It belongs to the class-I aminoacyl-tRNA synthetase family. As to quaternary structure, monomer. The cofactor is Zn(2+).

It localises to the cytoplasm. It carries out the reaction tRNA(Cys) + L-cysteine + ATP = L-cysteinyl-tRNA(Cys) + AMP + diphosphate. The polypeptide is Cysteine--tRNA ligase (Helicobacter pylori (strain P12)).